Here is a 170-residue protein sequence, read N- to C-terminus: Adenine phosphoribosyltransferase (170 aa).

It belongs to the purine/pyrimidine phosphoribosyltransferase family. As to quaternary structure, homodimer.

The protein localises to the cytoplasm. It catalyses the reaction AMP + diphosphate = 5-phospho-alpha-D-ribose 1-diphosphate + adenine. It functions in the pathway purine metabolism; AMP biosynthesis via salvage pathway; AMP from adenine: step 1/1. In terms of biological role, catalyzes a salvage reaction resulting in the formation of AMP, that is energically less costly than de novo synthesis. The sequence is that of Adenine phosphoribosyltransferase from Thermosipho africanus (strain TCF52B).